The primary structure comprises 377 residues: MHGRLPLTAQTHRRLVVKVGSAVLSGPQGRQHQLAIAAQVAALRAEGREVVLVSSGAQATGMQKLGLTEKPKSMPGKQALAAVGQPTLMLLWEQAFSWYDLKVAQVLLTAEDLAHRHRYLNARQTLETLLEWGIVPIINENDTVMVEEIKFGDNDQLSALIASLVGADLLILLSDIEALYEADPRTHPEAQPIPYVERVDAGVLRMAGDSPNRVGTGGMKSKLLAAEKAQAAGIPHLLLPGTRPQSIAEALQGAPVGTLFAGGQRRYSGRKLWLYQLPKPQGEVVVDAGAAKALRQGGASLLPAGILEVRGQFGVGEAVRCLDEQGNLIGVGLVNYSAAELARIKRRKTREIEALLGYKNTDEAIHRDYFALASELE.

Position 18 (Lys-18) interacts with ATP. 3 residues coordinate substrate: Ser-55, Asp-142, and Asn-154. Residues 174 to 175 and 216 to 222 each bind ATP; these read SD and TGGMKSK. The 79-residue stretch at 281 to 359 folds into the PUA domain; the sequence is QGEVVVDAGA…REIEALLGYK (79 aa).

The protein belongs to the glutamate 5-kinase family.

The protein resides in the cytoplasm. It carries out the reaction L-glutamate + ATP = L-glutamyl 5-phosphate + ADP. It participates in amino-acid biosynthesis; L-proline biosynthesis; L-glutamate 5-semialdehyde from L-glutamate: step 1/2. Functionally, catalyzes the transfer of a phosphate group to glutamate to form L-glutamate 5-phosphate. In Meiothermus ruber, this protein is Glutamate 5-kinase.